The primary structure comprises 273 residues: Large ribosomal subunit protein uL2cz/uL2cy (273 aa).

Disordered regions lie at residues Met1–Lys23 and Asn223–Lys273.

Belongs to the universal ribosomal protein uL2 family. In terms of assembly, part of the 50S ribosomal subunit.

Its subcellular location is the plastid. It is found in the chloroplast. The sequence is that of Large ribosomal subunit protein uL2cz/uL2cy (rpl2-A) from Oenothera argillicola (Appalachian evening primrose).